The primary structure comprises 867 residues: E3 ubiquitin-protein ligase SH3RF1 (867 aa).

The RING-type zinc finger occupies 12–53 (CPVCLERLDATAKVLPCQHTFCRRCLLGIVGSRGELRCPECR). The tract at residues 101-127 (AQGAGGSQRDPGPTGGQSQRVQAKSTP) is disordered. The span at 116 to 125 (GQSQRVQAKS) shows a compositional bias: polar residues. SH3 domains lie at 132-191 (PQLP…VIKP) and 194-257 (QPPP…FNSA). Residues 265–328 (DKPSEGGGDS…PPPQRHSMEI (64 aa)) are disordered. The segment covering 275 to 285 (SEGPSSSSSGP) has biased composition (low complexity). Residues 436-497 (QRPTVYVAMF…PGNYMSPVSR (62 aa)) enclose the SH3 3 domain. The interval 706 to 794 (LSNKKKLRPS…APIAPPPRQP (89 aa)) is disordered. A compositionally biased stretch (low complexity) spans 760-769 (SELSMSSSSS). Over residues 770-784 (NTDAVTHRSSPQDNT) the composition is skewed to polar residues. The SH3 4 domain maps to 808–867 (IVCERYRVVVSYPPQSEAELELKEGDIVFVHKKREDGWFKGTLQRNGRTGLFPGSFVDSI).

The protein belongs to the SH3RF family. In terms of processing, autoubiquitinated. Ubiquitinated by SH3RF2, leading to proteasome-mediated degradation.

Its subcellular location is the cytoplasm. It is found in the perinuclear region. The protein localises to the cell projection. It localises to the lamellipodium. The protein resides in the golgi apparatus. Its subcellular location is the trans-Golgi network. It carries out the reaction S-ubiquitinyl-[E2 ubiquitin-conjugating enzyme]-L-cysteine + [acceptor protein]-L-lysine = [E2 ubiquitin-conjugating enzyme]-L-cysteine + N(6)-ubiquitinyl-[acceptor protein]-L-lysine.. It participates in protein modification; protein ubiquitination. In terms of biological role, has E3 ubiquitin-protein ligase activity. In the absence of an external substrate, it can catalyze self-ubiquitination. Acts as a scaffold protein that contributes to the effective activation of the JNK signaling pathway. The polypeptide is E3 ubiquitin-protein ligase SH3RF1 (sh3rf1) (Danio rerio (Zebrafish)).